Reading from the N-terminus, the 147-residue chain is Large ribosomal subunit protein uL13 (147 aa).

Belongs to the universal ribosomal protein uL13 family. As to quaternary structure, part of the 50S ribosomal subunit.

This protein is one of the early assembly proteins of the 50S ribosomal subunit, although it is not seen to bind rRNA by itself. It is important during the early stages of 50S assembly. This Leuconostoc mesenteroides subsp. mesenteroides (strain ATCC 8293 / DSM 20343 / BCRC 11652 / CCM 1803 / JCM 6124 / NCDO 523 / NBRC 100496 / NCIMB 8023 / NCTC 12954 / NRRL B-1118 / 37Y) protein is Large ribosomal subunit protein uL13.